The chain runs to 537 residues: Bifunctional purine biosynthesis protein PurH (537 aa).

An MGS-like domain is found at 8–158 (IPAPDLVPVR…KNHAYVAVVT (151 aa)).

The protein belongs to the PurH family.

The enzyme catalyses (6R)-10-formyltetrahydrofolate + 5-amino-1-(5-phospho-beta-D-ribosyl)imidazole-4-carboxamide = 5-formamido-1-(5-phospho-D-ribosyl)imidazole-4-carboxamide + (6S)-5,6,7,8-tetrahydrofolate. It carries out the reaction IMP + H2O = 5-formamido-1-(5-phospho-D-ribosyl)imidazole-4-carboxamide. Its pathway is purine metabolism; IMP biosynthesis via de novo pathway; 5-formamido-1-(5-phospho-D-ribosyl)imidazole-4-carboxamide from 5-amino-1-(5-phospho-D-ribosyl)imidazole-4-carboxamide (10-formyl THF route): step 1/1. It participates in purine metabolism; IMP biosynthesis via de novo pathway; IMP from 5-formamido-1-(5-phospho-D-ribosyl)imidazole-4-carboxamide: step 1/1. The protein is Bifunctional purine biosynthesis protein PurH of Chelativorans sp. (strain BNC1).